Here is a 134-residue protein sequence, read N- to C-terminus: Small ribosomal subunit protein uS8c (134 aa).

This sequence belongs to the universal ribosomal protein uS8 family. Part of the 30S ribosomal subunit.

It localises to the plastid. Its subcellular location is the chloroplast. One of the primary rRNA binding proteins, it binds directly to 16S rRNA central domain where it helps coordinate assembly of the platform of the 30S subunit. This chain is Small ribosomal subunit protein uS8c (rps8), found in Ipomoea purpurea (Common morning glory).